Here is a 330-residue protein sequence, read N- to C-terminus: Phosphatidylglycerol--prolipoprotein diacylglyceryl transferase (330 aa).

The next 3 membrane-spanning stretches (helical) occupy residues 22 to 42 (LPIRAYALLIILGIVAALVVG), 57 to 77 (YDIALWAVPFGLVGGRLYHLA), and 97 to 117 (IWDGGLGIWGAVALGCVGAWL). Position 145 (arginine 145) interacts with a 1,2-diacyl-sn-glycero-3-phospho-(1'-sn-glycerol). Transmembrane regions (helical) follow at residues 193 to 213 (VVQPTFLYELIWNVLVFFALI) and 257 to 277 (INSFTSTFVFIGAVVYIILAP).

The protein belongs to the Lgt family.

It localises to the cell membrane. It catalyses the reaction L-cysteinyl-[prolipoprotein] + a 1,2-diacyl-sn-glycero-3-phospho-(1'-sn-glycerol) = an S-1,2-diacyl-sn-glyceryl-L-cysteinyl-[prolipoprotein] + sn-glycerol 1-phosphate + H(+). Its pathway is protein modification; lipoprotein biosynthesis (diacylglyceryl transfer). Catalyzes the transfer of the diacylglyceryl group from phosphatidylglycerol to the sulfhydryl group of the N-terminal cysteine of a prolipoprotein, the first step in the formation of mature lipoproteins. The protein is Phosphatidylglycerol--prolipoprotein diacylglyceryl transferase of Mycobacterium leprae (strain Br4923).